The sequence spans 109 residues: Thiosulfate sulfurtransferase GlpE (109 aa).

The Rhodanese domain maps to 16–104; sequence REQGAVVVDI…WRTTYPAEIS (89 aa). The Cysteine persulfide intermediate role is filled by Cys-64.

It belongs to the GlpE family.

The protein resides in the cytoplasm. It carries out the reaction thiosulfate + hydrogen cyanide = thiocyanate + sulfite + 2 H(+). The enzyme catalyses thiosulfate + [thioredoxin]-dithiol = [thioredoxin]-disulfide + hydrogen sulfide + sulfite + 2 H(+). In terms of biological role, transferase that catalyzes the transfer of sulfur from thiosulfate to thiophilic acceptors such as cyanide or dithiols. May function in a CysM-independent thiosulfate assimilation pathway by catalyzing the conversion of thiosulfate to sulfite, which can then be used for L-cysteine biosynthesis. The polypeptide is Thiosulfate sulfurtransferase GlpE (Pseudomonas fluorescens (strain SBW25)).